Reading from the N-terminus, the 120-residue chain is Large ribosomal subunit protein uL22 (120 aa).

Belongs to the universal ribosomal protein uL22 family. As to quaternary structure, part of the 50S ribosomal subunit.

Functionally, this protein binds specifically to 23S rRNA; its binding is stimulated by other ribosomal proteins, e.g. L4, L17, and L20. It is important during the early stages of 50S assembly. It makes multiple contacts with different domains of the 23S rRNA in the assembled 50S subunit and ribosome. In terms of biological role, the globular domain of the protein is located near the polypeptide exit tunnel on the outside of the subunit, while an extended beta-hairpin is found that lines the wall of the exit tunnel in the center of the 70S ribosome. The sequence is that of Large ribosomal subunit protein uL22 from Corynebacterium kroppenstedtii (strain DSM 44385 / JCM 11950 / CIP 105744 / CCUG 35717).